A 1306-amino-acid chain; its full sequence is Disease resistance protein Roq1 (1306 aa).

One can recognise a TIR domain in the interval 10-179 (RSYDVFLSFR…QILKDIFDKF (170 aa)). Residues 19-24 (RGEDTR) and G52 contribute to the NAD(+) site. The active site involves E86. The NB-ARC domain occupies 198-417 (KKLSSLLRMD…IDRLKDNPEG (220 aa)). LRR repeat units lie at residues 200–224 (LSSL…GVGK), 252–275 (LQHH…EFVD), 417–440 (GEIM…IFLD), 599–622 (PSKL…AKRL), 645–669 (ITNL…VGFL), 670–693 (KNLI…IQSE), 716–739 (MTHL…IEHL), 741–763 (SLEN…IWRF), 784–807 (SNCT…IGNL), 808–831 (TSLN…IWGL), 832–857 (TSLT…AINH), 878–902 (LDLL…IWML), 904–926 (FLRI…LGHL), 927–949 (EHLE…VARL), 961–983 (FAIG…VFGS), 987–1010 (LGSV…MNQL), 1013–1036 (LEYL…SIKE), and 1045–1070 (LRIM…EYQN).

Belongs to the disease resistance TIR-NB-LRR family. As to quaternary structure, homodimer.

The enzyme catalyses NAD(+) + H2O = ADP-D-ribose + nicotinamide + H(+). It catalyses the reaction NAD(+) = 2'cADPR + nicotinamide + H(+). Its function is as follows. Disease resistance (R) protein that specifically recognizes the Xanthomonas and Pseudomonas effector proteins XopQ and HopQ1, and triggers cell death. An NAD(+) hydrolase (NADase): in response to activation, catalyzes cleavage of NAD(+) into ADP-D-ribose (ADPR) and nicotinamide; NAD(+) cleavage triggers a defense system that promotes cell death. Makes small amounts of 2' cyclic ADPR (2'cADPR). This chain is Disease resistance protein Roq1, found in Nicotiana benthamiana.